The chain runs to 131 residues: Lysozyme C (131 aa).

The region spanning 2-131 (KIYEQCELAR…VSQWIKGCKL (130 aa)) is the C-type lysozyme domain. 4 disulfides stabilise this stretch: cysteine 7–cysteine 129, cysteine 31–cysteine 117, cysteine 66–cysteine 82, and cysteine 78–cysteine 96. Active-site residues include glutamate 36 and aspartate 54.

The protein belongs to the glycosyl hydrolase 22 family. As to quaternary structure, monomer.

It localises to the secreted. The enzyme catalyses Hydrolysis of (1-&gt;4)-beta-linkages between N-acetylmuramic acid and N-acetyl-D-glucosamine residues in a peptidoglycan and between N-acetyl-D-glucosamine residues in chitodextrins.. In terms of biological role, lysozymes have primarily a bacteriolytic function; those in tissues and body fluids are associated with the monocyte-macrophage system and enhance the activity of immunoagents. Has strong bacteriolytic activity against M.luteus and V.cholerae, weak bacteriolytic activity against P.aeruginosa and no activity against A.hydrophila. The sequence is that of Lysozyme C (LYZ) from Pelodiscus sinensis (Chinese softshell turtle).